The primary structure comprises 59 residues: Amyloid-beta precursor protein (59 aa).

Topologically, residues 1-34 (ISEVKMDAEFRHDSGYEVHHQKLVFFAEDVGSNK) are extracellular. The chain crosses the membrane as a helical span at residues 35-58 (GAIIGLMVGGVVIATVIVITLVML). A topological domain (cytoplasmic) is located at residue Lys-59.

The protein belongs to the APP family. In terms of assembly, binds, via its C-terminus, to the PID domain of several cytoplasmic proteins, including APBB family members, the APBA family, MAPK8IP1, SHC1 and NUMB and DAB1. Binding to DAB1 inhibits its serine phosphorylation. Interacts (via NPXY motif) with DAB2 (via PID domain); the interaction is impaired by tyrosine phosphorylation of the NPXY motif. Also interacts with GPCR-like protein BPP, APPBP1, IB1, KNS2 (via its TPR domains), APPBP2 (via BaSS) and DDB1. In vitro, it binds MAPT via the MT-binding domains. Associates with microtubules in the presence of ATP and in a kinesin-dependent manner. Interacts, through a C-terminal domain, with GNAO1. Interacts with CPEB1, ANKS1B and AGER. Interacts with ITM2B. Interacts with ITM2C. Interacts with IDE. Can form homodimers; dimerization is enhanced in the presence of Cu(2+) ions. Can form homodimers; this is promoted by heparin binding. Interacts with SORL1 (via N-terminal ectodomain); this interaction retains APP in the trans-Golgi network and reduces processing into soluble APP-alpha and amyloid-beta peptides. Interacts with PLD3. Interacts with VDAC1. Interacts with NSG1; could regulate APP processing. Amyloid-beta protein 42 interacts with FPR2. Interacts with LRRK2. Interacts (via cytoplasmic domain) with KIF5B. Interacts (via C-terminus) with APBB2/FE65L1 (via C-terminus). Interacts (via intracellular domain) with APBB3. In terms of processing, proteolytically processed under normal cellular conditions. Cleavage either by alpha-secretase, beta-secretase or theta-secretase leads to generation and extracellular release of soluble APP peptides, S-APP-alpha and S-APP-beta, and the retention of corresponding membrane-anchored C-terminal fragments, C80, C83 and C99. Subsequent processing of C80 and C83 by gamma-secretase yields P3 peptides. This is the major secretory pathway and is non-amyloidogenic. Alternatively, presenilin/nicastrin-mediated gamma-secretase processing of C99 releases the amyloid-beta proteins, amyloid-beta protein 40 and amyloid-beta protein 42, major components of amyloid plaques, and the cytotoxic C-terminal fragments, gamma-CTF(50), gamma-CTF(57) and gamma-CTF(59). PSEN1 cleavage is more efficient with C83 than with C99 as substrate (in vitro). Amyloid-beta protein 40 and Amyloid-beta protein 42 are cleaved by ACE. Many other minor amyloid-beta peptides, amyloid-beta 1-X peptides, are found in cerebral spinal fluid (CSF) including the amyloid-beta X-15 peptides, produced from the cleavage by alpha-secretase.

Its subcellular location is the cell membrane. The protein resides in the membrane. The protein localises to the perikaryon. It localises to the cell projection. It is found in the growth cone. Its subcellular location is the clathrin-coated pit. The protein resides in the early endosome. The protein localises to the cytoplasmic vesicle. It localises to the secreted. It is found in the cell surface. Its subcellular location is the nucleus. The protein resides in the cytoplasm. Its function is as follows. Functions as a cell surface receptor and performs physiological functions on the surface of neurons relevant to neurite growth, neuronal adhesion and axonogenesis. Interaction between APP molecules on neighboring cells promotes synaptogenesis. Involved in cell mobility and transcription regulation through protein-protein interactions. Can promote transcription activation through binding to APBB1-KAT5 and inhibit Notch signaling through interaction with Numb. Couples to apoptosis-inducing pathways such as those mediated by G(o) and JIP. Inhibits G(o)-alpha ATPase activity. Acts as a kinesin I membrane receptor, mediating the axonal transport of beta-secretase and presenilin 1. By acting as a kinesin I membrane receptor, plays a role in axonal anterograde transport of cargo towards synapses in axons. May be involved in copper homeostasis/oxidative stress through copper ion reduction. In vitro, copper-metallated APP induces neuronal death directly or is potentiated through Cu(2+)-mediated low-density lipoprotein oxidation. Can regulate neurite outgrowth through binding to components of the extracellular matrix such as heparin and collagen I and IV. Induces a AGER-dependent pathway that involves activation of p38 MAPK, resulting in internalization of amyloid-beta peptide and mitochondrial dysfunction in cultured cortical neurons. Provides Cu(2+) ions for GPC1 which are required for release of nitric oxide (NO) and subsequent degradation of the heparan sulfate chains on GPC1. This chain is Amyloid-beta precursor protein (APP), found in Bos taurus (Bovine).